A 245-amino-acid polypeptide reads, in one-letter code: 6-carboxyhexanoate--CoA ligase (245 aa).

Belongs to the BioW family. In terms of assembly, homodimer. It depends on Mg(2+) as a cofactor.

The catalysed reaction is heptanedioate + ATP + CoA = 6-carboxyhexanoyl-CoA + AMP + diphosphate. Its pathway is metabolic intermediate metabolism; pimeloyl-CoA biosynthesis; pimeloyl-CoA from pimelate: step 1/1. In terms of biological role, catalyzes the transformation of pimelate into pimeloyl-CoA with concomitant hydrolysis of ATP to AMP. This is 6-carboxyhexanoate--CoA ligase from Thermodesulfovibrio yellowstonii (strain ATCC 51303 / DSM 11347 / YP87).